The sequence spans 348 residues: MNPPAIDKVPDVTFVVAAYNSADTIVRAIESALAQEGVTVEVVVVDDCSADATPALVAAIPDPRVRLIALDRNRGPGGARNAGIGAARGRWIAVLDSDDTVRPDRLRRMIERADAAGAQIAVDNLDVVSLDGRSLRMFSEAELARLPQLTLPAFIESNVLFRSEHNFGYMKPIFERRFLENQQLRFDEALRIGEDYILLASALACGGRCAVEPSAGYIYHIREGSISRVLRLDHIDAMIAADEAFLRRYALDGLAQKMQHRRMRGFREARSFLVLVEQLKKRSLAGALKTALADPFALRHLSMPIAARLRRLAARFVHPSSHSAPRAAPVTAAAERSPLGNDPRISKG.

Positions 322–348 (HSAPRAAPVTAAAERSPLGNDPRISKG) are disordered. The span at 324 to 334 (APRAAPVTAAA) shows a compositional bias: low complexity.

This sequence belongs to the glycosyltransferase 2 family.

It is found in the cytoplasm. Its pathway is glycan metabolism; exopolysaccharide biosynthesis. Glycosyltransferase required for the synthesis of succinoglycan (EPS I). Needed for the addition of the fifth sugar (glucose), catalyzes the formation of a beta-1,6 linkage between the fourth and fifth sugar. In Rhizobium meliloti (strain 1021) (Ensifer meliloti), this protein is Succinoglycan biosynthesis protein ExoO (exoO).